The primary structure comprises 617 residues: AUGMIN subunit 3 (617 aa).

3 coiled-coil regions span residues 107–140 (DATL…SSAL), 314–334 (LHSL…LYQK), and 481–504 (AIIQ…ENSL).

Belongs to the HAUS3 family. Part of the augmin complex composed of 8 subunits. The complex acts on microtubules and interacts with gamma-tubulin in spindles and the phragmoplast. Interacts with AUG1.

It is found in the cytoplasm. The protein localises to the cytoskeleton. The protein resides in the spindle. Its subcellular location is the phragmoplast. In terms of biological role, involved in microtubules reorganization during spindle and phragmoplast development. Required for gamma-tubulin localization during mitosis. This chain is AUGMIN subunit 3, found in Arabidopsis thaliana (Mouse-ear cress).